The chain runs to 291 residues: Popeye domain-containing protein 3 (291 aa).

N-linked (GlcNAc...) asparagine glycosylation is present at asparagine 4. The next 3 helical transmembrane spans lie at 27–44 (GAIY…FMGG), 48–70 (FGLL…WAWV), and 77–99 (IFSW…AYQV).

The protein belongs to the popeye family. As to expression, expressed in cardiac and skeletal muscle.

The protein localises to the membrane. May play a role in the maintenance of heart function mediated, at least in part, through cAMP-binding. May play a role in the regulation of KCNK2-mediated current amplitude. The sequence is that of Popeye domain-containing protein 3 (Popdc3) from Mus musculus (Mouse).